The following is a 138-amino-acid chain: Acidic phospholipase A2 MVL-PLA2 (138 aa).

The N-terminal stretch at 1–16 (MRTLWIVAVCLMGVEG) is a signal peptide. Cystine bridges form between cysteine 42-cysteine 131, cysteine 44-cysteine 60, cysteine 59-cysteine 111, cysteine 65-cysteine 138, cysteine 66-cysteine 104, cysteine 73-cysteine 97, and cysteine 91-cysteine 102. Positions 43, 45, and 47 each coordinate Ca(2+). The active site involves histidine 63. Aspartate 64 provides a ligand contact to Ca(2+). Positions 86–88 (NGD) match the May inhibit integrin function (Atypical cell attachment site) motif. Aspartate 105 is a catalytic residue.

Belongs to the phospholipase A2 family. Group II subfamily. D49 sub-subfamily. It depends on Ca(2+) as a cofactor. As to expression, expressed by the venom gland.

The protein resides in the secreted. The enzyme catalyses a 1,2-diacyl-sn-glycero-3-phosphocholine + H2O = a 1-acyl-sn-glycero-3-phosphocholine + a fatty acid + H(+). In terms of biological role, snake venom phospholipase A2 (PLA2) that displays an inhibitory effect, independent from its catalytic activity, on tumor cell adhesion and migration. This effect is mediated via specific inhibition of integrins alpha-5/beta-1 (ITGA5/ITGB1), alpha-v/beta-3 (ITGAV/ITGB3) and alpha-v/beta-6 (ITGAV/ITGB6). PLA2 catalyzes the calcium-dependent hydrolysis of the 2-acyl groups in 3-sn-phosphoglycerides. The polypeptide is Acidic phospholipase A2 MVL-PLA2 (Macrovipera lebetina transmediterranea (Blunt-nosed viper)).